The sequence spans 253 residues: MLAKRIIPCLDVHEGRVVKGTNFVNLRDAGDPVELAALYDREGADELVFLDISASAEGRETMVEVVRRTAEQVFIPFTIGGGLRRVEDIRKMLRAGADKVSLNTSAVQTPGLIEEGAHAFGSQCIVVAIDARQTRPGAWEVYIHGGRTPTGKDVLQWAEEVERLGAGEILLTSMNRDGTKNGYDLELTRAVSRAVSLPVIASGGVGTLEHLAEGLTIGEADAVLAASIFHYQEYSIGEAKAYLEERGIPVRKG.

Catalysis depends on residues Asp-11 and Asp-130.

This sequence belongs to the HisA/HisF family. In terms of assembly, heterodimer of HisH and HisF.

Its subcellular location is the cytoplasm. It carries out the reaction 5-[(5-phospho-1-deoxy-D-ribulos-1-ylimino)methylamino]-1-(5-phospho-beta-D-ribosyl)imidazole-4-carboxamide + L-glutamine = D-erythro-1-(imidazol-4-yl)glycerol 3-phosphate + 5-amino-1-(5-phospho-beta-D-ribosyl)imidazole-4-carboxamide + L-glutamate + H(+). The protein operates within amino-acid biosynthesis; L-histidine biosynthesis; L-histidine from 5-phospho-alpha-D-ribose 1-diphosphate: step 5/9. Its function is as follows. IGPS catalyzes the conversion of PRFAR and glutamine to IGP, AICAR and glutamate. The HisF subunit catalyzes the cyclization activity that produces IGP and AICAR from PRFAR using the ammonia provided by the HisH subunit. The polypeptide is Imidazole glycerol phosphate synthase subunit HisF (Desulfitobacterium hafniense (strain DSM 10664 / DCB-2)).